The chain runs to 345 residues: HTH-type transcriptional regulator reg1 (345 aa).

Residues 1–58 (MTTRLADIAAQAGVSEATVSRVLNGKPGVAATTRQSVLAALDVLGYERPVRLRRRSAG) enclose the HTH lacI-type domain. A DNA-binding region (H-T-H motif) is located at residues 5 to 24 (LADIAAQAGVSEATVSRVLN).

Its function is as follows. Transcription repressor involved in control of expression of alpha-amylase and chitinase genes and of actinorhodin production. This Streptomyces lividans protein is HTH-type transcriptional regulator reg1 (reg1).